A 252-amino-acid chain; its full sequence is Small ribosomal subunit protein uS2 (252 aa).

Belongs to the universal ribosomal protein uS2 family.

This Ruminiclostridium cellulolyticum (strain ATCC 35319 / DSM 5812 / JCM 6584 / H10) (Clostridium cellulolyticum) protein is Small ribosomal subunit protein uS2.